The chain runs to 119 residues: Holo-[acyl-carrier-protein] synthase (119 aa).

Mg(2+) contacts are provided by aspartate 8 and glutamate 58.

The protein belongs to the P-Pant transferase superfamily. AcpS family. Mg(2+) is required as a cofactor.

It localises to the cytoplasm. The catalysed reaction is apo-[ACP] + CoA = holo-[ACP] + adenosine 3',5'-bisphosphate + H(+). Functionally, transfers the 4'-phosphopantetheine moiety from coenzyme A to a Ser of acyl-carrier-protein. This Bacillus cereus (strain ATCC 10987 / NRS 248) protein is Holo-[acyl-carrier-protein] synthase.